Consider the following 326-residue polypeptide: Target of rapamycin complex subunit LST8 (326 aa).

Methionine 1 bears the N-acetylmethionine mark. WD repeat units lie at residues 1 to 37 (MNTSPGTVGSDPVILATAGYDHTVRFWQAHSGICTRT), 40 to 80 (HQDS…PIIS), 83 to 122 (GVNKNVASVGFHEDGRWMYTGGEDCTARIWDLRSRNLQCQ), 126 to 165 (QVNAPINCVCLHPNQAELIVGDQSGAIHIWDLKTDHNEQL), and 168 to 207 (EPEVSITSAHIDPDASYMAAVNSTGNCYVWNLTGGIGDEV). Threonine 51 is subject to Phosphothreonine. Lysine 86 participates in a covalent cross-link: Glycyl lysine isopeptide (Lys-Gly) (interchain with G-Cter in SUMO3). Glycyl lysine isopeptide (Lys-Gly) (interchain with G-Cter in SUMO3) cross-links involve residues lysine 215, lysine 245, and lysine 261. Residues 218-257 (AHTRYALQCRFSPDSTLLATCSADQTCKIWRTSNFSLMTE) form a WD 6 repeat. The stretch at 268 to 309 (SSRGWMWGCAFSGDSQYIVTASSDNLARLWCVETGEIKREYG) is one WD 7 repeat. A Glycyl lysine isopeptide (Lys-Gly) (interchain with G-Cter in SUMO3); alternate cross-link involves residue lysine 305. Glycyl lysine isopeptide (Lys-Gly) (interchain with G-Cter in ubiquitin); alternate cross-links involve residues lysine 305 and lysine 313. Lysine 313 participates in a covalent cross-link: Glycyl lysine isopeptide (Lys-Gly) (interchain with G-Cter in SUMO1); alternate.

Belongs to the WD repeat LST8 family. Part of the mechanistic target of rapamycin complex 1 (mTORC1) which contains MTOR, MLST8 and RPTOR. mTORC1 associates with AKT1S1/PRAS40, which inhibits its activity. mTORC1 binds to and is inhibited by FKBP12-rapamycin. Within mTORC1, interacts directly with MTOR and RPTOR. Component of the mechanistic target of rapamycin complex 2 (mTORC2), consisting in two heterotretramers composed of MTOR, MLST8, RICTOR and MAPKAP1/SIN1. Contrary to mTORC1, mTORC2 does not bind to and is not sensitive to FKBP12-rapamycin. mTORC1 and mTORC2 associate with DEPTOR, which regulates their activity. Interacts with RHEB. Interacts with MEAK7. Interacts with SIK3. Interacts with SLC38A7; this interaction promotes the recruitment of mTORC1 to the lysosome and its subsequent activation. Post-translationally, phosphorylation at Thr-51 by CDK1 promotes ubiquitination by the SCF(FBXW7) complex, followed by degradation. In terms of processing, ubiquitination by the SCF(FBXW7) and SCF(FBXW11) complexes following phosphorylation at Thr-51 by CDK1, leads to its degradation by the proteasome. Ubiquitination at Lys-305 and Lys-313 by TRAF2 via 'Lys-63'-linked polyubiquitin chains inhibits formation of the mTORC2 complex, while promoting formation of the mTORC1 complex: ubiquitination disrupts the interaction between MLST8 and MAPKAP1/SIN1 to favor mTORC1 assembly. Deubiquitination at Lys-305 and Lys-313 by OTUD7B promotes MLST8 interaction with MAPKAP1/SIN1, facilitating mTORC2 assembly. Sumoylation with SUMO1, SUMO2 and SUMO3 promotes assembly of both mTORC1 and mTORC2 complexes.

It localises to the lysosome membrane. The protein resides in the cytoplasm. In terms of biological role, subunit of both mTORC1 and mTORC2, which regulates cell growth and survival in response to nutrient and hormonal signals. mTORC1 is activated in response to growth factors or amino acids. In response to nutrients, mTORC1 is recruited to the lysosome membrane and promotes protein, lipid and nucleotide synthesis by phosphorylating several substrates, such as ribosomal protein S6 kinase (RPS6KB1 and RPS6KB2) and EIF4EBP1 (4E-BP1). In the same time, it inhibits catabolic pathways by phosphorylating the autophagy initiation components ULK1 and ATG13, as well as transcription factor TFEB, a master regulators of lysosomal biogenesis and autophagy. The mTORC1 complex is inhibited in response to starvation and amino acid depletion. Within mTORC1, MLST8 interacts directly with MTOR and enhances its kinase activity. In nutrient-poor conditions, stabilizes the MTOR-RPTOR interaction and favors RPTOR-mediated inhibition of MTOR activity. As part of the mTORC2 complex, transduces signals from growth factors to pathways involved in proliferation, cytoskeletal organization, lipogenesis and anabolic output. mTORC2 is also activated by growth factors, but seems to be nutrient-insensitive. In response to growth factors, mTORC2 phosphorylates and activates AGC protein kinase family members, including AKT (AKT1, AKT2 and AKT3), PKC (PRKCA, PRKCB and PRKCE) and SGK1. mTORC2 functions upstream of Rho GTPases to regulate the actin cytoskeleton, probably by activating one or more Rho-type guanine nucleotide exchange factors. mTORC2 promotes the serum-induced formation of stress-fibers or F-actin. mTORC2 plays a critical role in AKT1 activation by mediating phosphorylation of different sites depending on the context, such as 'Thr-450', 'Ser-473', 'Ser-477' or 'Thr-479', facilitating the phosphorylation of the activation loop of AKT1 on 'Thr-308' by PDPK1/PDK1 which is a prerequisite for full activation. mTORC2 regulates the phosphorylation of SGK1 at 'Ser-422'. mTORC2 also modulates the phosphorylation of PRKCA on 'Ser-657'. Within mTORC2, MLST8 acts as a bridge between MAPKAP1/SIN1 and MTOR. This chain is Target of rapamycin complex subunit LST8, found in Bos taurus (Bovine).